A 757-amino-acid polypeptide reads, in one-letter code: MGIFNKVTKTFQWGDQTVVMETGEIARQASGAVLVSIDDTVVLATVVASRSIKPGQDFFPLTVDYIEKTYAAGKIPGSFFKREAKPSEHETLTSRLIDRPLRPLFPQGFFNEVHLVIHTLSLNPEVDADIAALIASSAALALSGIPFNGPIGAARVGYIQGEYRLNPGPTARKSSQLDLVVAGTEAAVLMVESEAQQLSEEIMLGAVVFGHQQGKVAIDAIHELVHAAGKPVWQWEAPARDEALIARVAALADDKLRAAYQIRNKQARTEACRAAYAAVLAQLQADGVECDTVKAEGLLFDIEAGIVRSQILAGEPRIDGRDTRTVRPIEIRAGVLPRAHGSALFTRGETQALAVATLGTERDAQRIDALAGEYDDRFMLHYNMPPFATGEVGRMGSTKRREIGHGRLAKRALVAVLPTKEEFPYTMRVVSEITESNGSSSMASVCGGCLSLMDAGVPMKAHVAGIAMGLIKDGNRFAVLTDILGDEDHLGDMDFKVAGTTAGITALQMDIKIQGITREIMQVALAQAKEARMHILGKMQQAIGQAKTEVSNFAPKLYTMKINAEKIRDVIGKGGAVIRALTEETGCQINIEEDGTITIAATDAAKADIAKRRIEQITAEIEIGKIYEGPVTKLLDFGALINLLPGKDGLLHISQIAHERVERVSDYLSEGQIVRVKVMEADERGRVKLSMKVLAERPAPGSDRFGTGSERPAPGSDRPALAEREPRREMRDHGHPPSEQQQQQSPPADTGSGQRVG.

Residues aspartate 488 and aspartate 494 each contribute to the Mg(2+) site. A KH domain is found at 555–614; that stretch reads PKLYTMKINAEKIRDVIGKGGAVIRALTEETGCQINIEEDGTITIAATDAAKADIAKRRI. Residues 624–692 enclose the S1 motif domain; the sequence is GKIYEGPVTK…ERGRVKLSMK (69 aa). The segment at 693-757 is disordered; it reads VLAERPAPGS…ADTGSGQRVG (65 aa). Residues 720–736 show a composition bias toward basic and acidic residues; the sequence is ALAEREPRREMRDHGHP. Residues 737–747 are compositionally biased toward low complexity; sequence PSEQQQQQSPP.

Belongs to the polyribonucleotide nucleotidyltransferase family. Mg(2+) is required as a cofactor.

The protein resides in the cytoplasm. It carries out the reaction RNA(n+1) + phosphate = RNA(n) + a ribonucleoside 5'-diphosphate. Its function is as follows. Involved in mRNA degradation. Catalyzes the phosphorolysis of single-stranded polyribonucleotides processively in the 3'- to 5'-direction. This chain is Polyribonucleotide nucleotidyltransferase, found in Verminephrobacter eiseniae (strain EF01-2).